Here is a 349-residue protein sequence, read N- to C-terminus: tRNA pseudouridine synthase D (349 aa).

Phenylalanine 27 is a substrate binding site. Aspartate 80 functions as the Nucleophile in the catalytic mechanism. Asparagine 129 is a substrate binding site. One can recognise a TRUD domain in the interval 155 to 303; that stretch reads GVPNYFGAQR…VEASRRAMLL (149 aa). Phenylalanine 329 contributes to the substrate binding site.

The protein belongs to the pseudouridine synthase TruD family.

It carries out the reaction uridine(13) in tRNA = pseudouridine(13) in tRNA. Its function is as follows. Responsible for synthesis of pseudouridine from uracil-13 in transfer RNAs. This is tRNA pseudouridine synthase D from Salmonella dublin (strain CT_02021853).